Consider the following 174-residue polypeptide: UPF0316 protein Dhaf_3052 (174 aa).

The next 3 membrane-spanning stretches (helical) occupy residues 4–24, 35–55, and 59–79; these read ILQF…LTTI, VYAS…LSII, and LDSY…VYLG.

Belongs to the UPF0316 family.

Its subcellular location is the cell membrane. This Desulfitobacterium hafniense (strain DSM 10664 / DCB-2) protein is UPF0316 protein Dhaf_3052.